A 395-amino-acid chain; its full sequence is Inner membrane protein YjgN (395 aa).

Residues 1–24 are Cytoplasmic-facing; it reads MNNVISSKDNHNHTLVFTGKGGKY. Residues 25 to 45 traverse the membrane as a helical segment; the sequence is FVICLVNFLLTCITLGIYAPW. Residues 46–71 are Periplasmic-facing; that stretch reads AMVKCRRYIYTNMTLNNQPFAYKATG. Residues 72–92 traverse the membrane as a helical segment; the sequence is GALFISVLLVFIIYIVSLSLI. At 93-95 the chain is on the cytoplasmic side; the sequence is EHG. The helical transmembrane segment at 96-116 threads the bilayer; it reads HPGLGFTLFGLLIAIIPFMAV. The Periplasmic segment spans residues 117–146; sequence KGLQYQAMMTSLNGVHFGFQCSMRRAWWYM. A helical membrane pass occupies residues 147-167; the sequence is FALPVLLMVALYIVLYIISLV. A topological domain (cytoplasmic) is located at residue Thr168. A helical membrane pass occupies residues 169-189; the sequence is IAVGGLVFSIVFLGLLAIIGI. At 190-229 the chain is on the periplasmic side; it reads GVINGITYSKWMTLFGNGANFGIHRFSIQVNVKTCIRGCV. The chain crosses the membrane as a helical span at residues 230–250; the sequence is LAMLTLFPFAVVIGYLIAPVF. Residues 251–275 lie on the Cytoplasmic side of the membrane; the sequence is TDMILLSMMGNAQAGGALILQYYGQ. A helical membrane pass occupies residues 276 to 296; sequence IMACYFLYFLAIIVVTSYLYV. Residues 297 to 327 lie on the Periplasmic side of the membrane; it reads ALRNLFLNNLSLANDSIRFHSSVTAHGMLWR. A helical transmembrane segment spans residues 328 to 348; the sequence is LLVVFVISGVTLGLAYPWLKI. The Cytoplasmic segment spans residues 349–395; that stretch reads WLVSWLAQNTQVQGDLDSLELTNDEKPLENSPLMWISRGIMPYFPFI.

It is found in the cell inner membrane. The chain is Inner membrane protein YjgN (yjgN) from Salmonella typhimurium (strain LT2 / SGSC1412 / ATCC 700720).